Consider the following 382-residue polypeptide: ORC1-type DNA replication protein 1 (382 aa).

Residues 63 to 67 (TGKTA), tyrosine 205, and arginine 217 each bind ATP.

It belongs to the CDC6/cdc18 family. Monomer. Interacts with MCM via the WH domain. Autophosphorylated on a serine. Phosphorylation is stimulated by binding to MCM. Both single-stranded DNA and double-stranded DNA inhibit the phosphorylation reaction.

Involved in regulation of DNA replication. May play an essential role in origin recognition. Binds to DNA, with a preference for origin-specific double-stranded sequences. Does not bind single-stranded DNA. Inhibits MCM helicase activity but does not affect its oligomeric state. This Methanothermobacter thermautotrophicus (strain ATCC 29096 / DSM 1053 / JCM 10044 / NBRC 100330 / Delta H) (Methanobacterium thermoautotrophicum) protein is ORC1-type DNA replication protein 1 (cdc6-1).